A 300-amino-acid polypeptide reads, in one-letter code: Transcription initiation factor IIB (300 aa).

The TFIIB-type zinc-finger motif lies at 2–34; the sequence is TKQKVCPVCGSTEFIYDPERGEIVCARCGYVIE. 4 residues coordinate Zn(2+): C7, C10, C26, and C29. A run of 2 repeats spans residues 114–197 and 210–291.

Belongs to the TFIIB family.

In terms of biological role, stabilizes TBP binding to an archaeal box-A promoter. Also responsible for recruiting RNA polymerase II to the pre-initiation complex (DNA-TBP-TFIIB). The chain is Transcription initiation factor IIB from Pyrococcus horikoshii (strain ATCC 700860 / DSM 12428 / JCM 9974 / NBRC 100139 / OT-3).